The chain runs to 215 residues: Cytochrome b6 (215 aa).

Residues 32 to 52 (IFYCLGGITLTCFLIQFATGF) form a helical membrane-spanning segment. Cys35 is a binding site for heme c. Heme b-binding residues include His86 and His100. A run of 3 helical transmembrane segments spans residues 90–110 (ASMM…TGGF), 116–136 (LTWV…VTGY), and 186–206 (AHTF…FLMI). 2 residues coordinate heme b: His187 and His202.

The protein belongs to the cytochrome b family. PetB subfamily. As to quaternary structure, the 4 large subunits of the cytochrome b6-f complex are cytochrome b6, subunit IV (17 kDa polypeptide, PetD), cytochrome f and the Rieske protein, while the 4 small subunits are PetG, PetL, PetM and PetN. The complex functions as a dimer. It depends on heme b as a cofactor. Heme c is required as a cofactor.

It localises to the cellular thylakoid membrane. Component of the cytochrome b6-f complex, which mediates electron transfer between photosystem II (PSII) and photosystem I (PSI), cyclic electron flow around PSI, and state transitions. The protein is Cytochrome b6 of Desmonostoc sp. (strain PCC 7906) (Nostoc sp. (strain PCC 7906)).